The following is a 172-amino-acid chain: Protein CapG (172 aa).

This sequence belongs to the transferase hexapeptide repeat family.

It functions in the pathway capsule biogenesis; capsule polysaccharide biosynthesis. Required for the biosynthesis of type 1 capsular polysaccharide. In Staphylococcus aureus, this protein is Protein CapG (capG).